An 877-amino-acid polypeptide reads, in one-letter code: Lipophilic envelope-spanning tunnel protein B (877 aa).

At 1–19 (MSQETPASTTEAQIKNKRR) the chain is on the cytoplasmic side. A helical transmembrane segment spans residues 20–40 (ISPFWLLPFIALMIASWLIWD). Residues 41-877 (SYQDRGNTVT…WREWGTALPK (837 aa)) are Periplasmic-facing. 7 MCE/MlaD regions span residues 46–149 (GNTV…VALD), 160–272 (DLMI…GLYE), 279–382 (RGVI…VVPG), 391–499 (DVLT…PLYA), 515–625 (TTVS…ILYA), 634–737 (GGQI…LQEA), and 746–862 (DGLS…LLQE).

It belongs to the PqiB family. Homohexamer. May interact with LetA in the inner membrane. May also interact with partners in the outer membrane.

The protein resides in the cell inner membrane. Its function is as follows. Forms a tunnel that spans the entire periplasmic space. Is probably involved in the transport of lipids between the inner membrane and the outer membrane through the tunnel. Forms a dynamic tunnel sufficiently long to mediate lipid transport directly between the two membranes without the need for a shuttle protein. Binds phospholipids. Lipids bind inside the tunnel. Required for outer membrane homeostasis. Contributes to membrane integrity. The polypeptide is Lipophilic envelope-spanning tunnel protein B (Escherichia coli (strain K12)).